The sequence spans 376 residues: Flagellin B (376 aa).

The stretch at 103–129 forms a coiled coil; sequence SNSSSERRAIQEEVSALNDELNRIAET.

The protein belongs to the bacterial flagellin family. In terms of assembly, heteromer of multiple flagellin subunits including FlaA, FlaB, FlaC, FlaD and FlaE.

The protein resides in the secreted. It is found in the bacterial flagellum. Its function is as follows. Flagellin is the subunit protein which polymerizes to form the filaments of bacterial flagella. FlaB is not essential for flagellar synthesis and motility. The polypeptide is Flagellin B (flaB) (Vibrio cholerae serotype O1 (strain ATCC 39541 / Classical Ogawa 395 / O395)).